The chain runs to 458 residues: F-box/FBD/LRR-repeat protein At1g78750 (458 aa).

The F-box domain occupies 17–67; sequence VDWISNLPETLLCQVLFYLPTKDVVKSSVLSSRWRNLWKYVPGFNLSYCDF. LRR repeat units follow at residues 152–183, 184–209, 231–258, 302–327, and 345–370; these read CETL…HLSI, VKFA…NINR, VADT…RLSD, DFLV…YDYS, and FYGY…VVGS. One can recognise an FBD domain in the interval 376-428; sequence KEGINILSVPRGFLSSLEYVKIERPLKGEAMEMKLVSYLLENSTILKKLTLCL.

This chain is F-box/FBD/LRR-repeat protein At1g78750, found in Arabidopsis thaliana (Mouse-ear cress).